Here is a 280-residue protein sequence, read N- to C-terminus: Phosphonoacetaldehyde hydrolase (280 aa).

Residue D23 is the Nucleophile of the active site. Residues D23 and A25 each coordinate Mg(2+). The active-site Schiff-base intermediate with substrate is K64. D197 is a binding site for Mg(2+).

Belongs to the HAD-like hydrolase superfamily. PhnX family. In terms of assembly, homodimer. Mg(2+) is required as a cofactor.

It carries out the reaction phosphonoacetaldehyde + H2O = acetaldehyde + phosphate + H(+). In terms of biological role, involved in phosphonate degradation. The polypeptide is Phosphonoacetaldehyde hydrolase (Bordetella avium (strain 197N)).